The primary structure comprises 250 residues: AA9 family lytic polysaccharide monooxygenase B (250 aa).

Residues 1 to 21 form the signal peptide; the sequence is MTLSKITSIAGLLASASLVAG. 2 residues coordinate Cu(2+): H22 and H107. At H22 the chain carries Methylhistidine. 2 cysteine pairs are disulfide-bonded: C77–C199 and C118–C122. N159 carries N-linked (GlcNAc...) asparagine glycosylation. The O2 site is built by H185 and Q194. Cu(2+) is bound at residue Y196.

It belongs to the polysaccharide monooxygenase AA9 family. Cu(2+) is required as a cofactor. The catalytically essential N-terminal histidine His-22 is post-translationally modified by methylation to prevent protonation of the histidine side chain, and protect the critical active site of the enzyme from oxidative damage.

Its subcellular location is the secreted. It carries out the reaction [(1-&gt;4)-beta-D-glucosyl]n+m + reduced acceptor + O2 = 4-dehydro-beta-D-glucosyl-[(1-&gt;4)-beta-D-glucosyl]n-1 + [(1-&gt;4)-beta-D-glucosyl]m + acceptor + H2O.. Lytic polysaccharide monooxygenase (LPMO) that depolymerizes crystalline and amorphous polysaccharides via the oxidation of scissile alpha- or beta-(1-4)-glycosidic bonds, yielding C1 and C4 oxidation products. Catalysis by LPMOs requires the reduction of the active-site copper from Cu(II) to Cu(I) by a reducing agent and H(2)O(2) or O(2) as a cosubstrate. Shows activity on phosphoric acid swollen cellulose, on NaOH pretreated soy spent flakes as well as on crystalline cellulose (Avicel). Does not have a positive effect on cel6A activity, but acts synergistically with endoglucanase egl7. The polypeptide is AA9 family lytic polysaccharide monooxygenase B (Aspergillus fumigatus (strain ATCC MYA-4609 / CBS 101355 / FGSC A1100 / Af293) (Neosartorya fumigata)).